A 408-amino-acid polypeptide reads, in one-letter code: Retron Ec48 reverse transcriptase (408 aa).

Residues 43–269 (EELKAIAELP…EPIKVHGLRV (227 aa)) enclose the Reverse transcriptase domain. Mg(2+)-binding residues include Asp-137, Asp-216, and Asp-217.

This sequence belongs to the bacterial reverse transcriptase family.

It catalyses the reaction DNA(n) + a 2'-deoxyribonucleoside 5'-triphosphate = DNA(n+1) + diphosphate. Reverse transcriptase (RT) component of antiviral defense system retron Ec48, composed of a non-coding RNA (ncRNA), this reverse transcriptase (RT) and the following membrane protein. Expression of this retron confers protection against bacteriophages lambda, T2, T4, T5 and T7. At multiplicity of infection (MOI) of 0.02 cultures grow normally when infected with lambda without collapsing, at MOI 2 cultures enter growth stasis. At MOI 3 cell membranes are permeabilized within 15 minutes of infection but do not lyse, suggesting the phage are not able to finish a replication cycle. Antiviral defense is suppressed by mutations that knockout the lambda gam expression or phage T7 gp5.9 expression; both viral genes inhibit host RecBCD. The Ec48 retron may sense the integrity of the RecBCD enzyme; when RecBCD is perturbed by viral proteins the Ec48 effector (the membrane protein) is activated, leading to abortive infection and bacterial growth arrest. Responsible for synthesis of msDNA-Ec48 (a branched molecule with RNA linked by a 2',5'-phosphodiester bond to ssDNA). The retron transcript serves as primer (from a conserved internal G residue) and template for the reaction, and codes for the RT. This Escherichia coli protein is Retron Ec48 reverse transcriptase.